A 75-amino-acid polypeptide reads, in one-letter code: DNA-directed RNA polymerase subunit epsilon (75 aa).

It belongs to the RNA polymerase subunit epsilon family. RNAP is composed of a core of 2 alpha, a beta and a beta' subunit. The core is associated with a delta subunit, and at least one of epsilon or omega. When a sigma factor is associated with the core the holoenzyme is formed, which can initiate transcription.

It carries out the reaction RNA(n) + a ribonucleoside 5'-triphosphate = RNA(n+1) + diphosphate. Its function is as follows. A non-essential component of RNA polymerase (RNAP). The chain is DNA-directed RNA polymerase subunit epsilon from Lactobacillus johnsonii (strain CNCM I-12250 / La1 / NCC 533).